We begin with the raw amino-acid sequence, 97 residues long: Small ribosomal subunit protein bS20 (97 aa).

Belongs to the bacterial ribosomal protein bS20 family.

Functionally, binds directly to 16S ribosomal RNA. This Prochlorococcus marinus (strain MIT 9215) protein is Small ribosomal subunit protein bS20.